The primary structure comprises 312 residues: DNA-directed RNA polymerase subunit alpha (312 aa).

Residues 1–226 form an alpha N-terminal domain (alpha-NTD) region; that stretch reads MIEFEKPNIT…EHLDLFTDLT (226 aa). The interval 244 to 312 is alpha C-terminal domain (alpha-CTD); sequence DHVLERTIEE…DLGLGLKNDK (69 aa).

It belongs to the RNA polymerase alpha chain family. Homodimer. The RNAP catalytic core consists of 2 alpha, 1 beta, 1 beta' and 1 omega subunit. When a sigma factor is associated with the core the holoenzyme is formed, which can initiate transcription.

The enzyme catalyses RNA(n) + a ribonucleoside 5'-triphosphate = RNA(n+1) + diphosphate. In terms of biological role, DNA-dependent RNA polymerase catalyzes the transcription of DNA into RNA using the four ribonucleoside triphosphates as substrates. The sequence is that of DNA-directed RNA polymerase subunit alpha from Streptococcus gordonii (strain Challis / ATCC 35105 / BCRC 15272 / CH1 / DL1 / V288).